The following is a 578-amino-acid chain: Cholesterol oxidase (578 aa).

FAD is bound by residues glycine 15, glutamate 34, glycine 85, alanine 90, and valine 230. Histidine 470 acts as the Proton acceptor in catalysis. An FAD-binding site is contributed by glycine 503. The segment at 529-551 (WPNKGETDRRPPQGEPYRRLAPI) is disordered. Positions 533-546 (GETDRRPPQGEPYR) are enriched in basic and acidic residues.

It belongs to the GMC oxidoreductase family. The cofactor is FAD.

The protein localises to the secreted. It carries out the reaction cholesterol + O2 = cholest-5-en-3-one + H2O2. It catalyses the reaction cholest-5-en-3-one = cholest-4-en-3-one. Its pathway is steroid metabolism; cholesterol degradation. In terms of biological role, bifunctional enzyme that catalyzes the oxidation and isomerization of cholesterol to cholestenone (cholest-4-en-3-one), an initial step in the cholesterol degradation process. Contributes to virulence. The chain is Cholesterol oxidase (choD) from Mycobacterium tuberculosis (strain CDC 1551 / Oshkosh).